A 95-amino-acid polypeptide reads, in one-letter code: Cobalt transport protein CbiN (95 aa).

Helical transmembrane passes span 7–27 and 67–87; these read IMLIAVAVIAIAPLVIYSGLG and LLFALQAAIGALIIGYVFGYY.

Belongs to the CbiN family. As to quaternary structure, forms an energy-coupling factor (ECF) transporter complex composed of an ATP-binding protein (A component, CbiO), a transmembrane protein (T component, CbiQ) and 2 possible substrate-capture proteins (S components, CbiM and CbiN) of unknown stoichimetry.

Its subcellular location is the cell membrane. Its pathway is cofactor biosynthesis; adenosylcobalamin biosynthesis. Part of the energy-coupling factor (ECF) transporter complex CbiMNOQ involved in cobalt import. The chain is Cobalt transport protein CbiN from Methanothermobacter marburgensis (strain ATCC BAA-927 / DSM 2133 / JCM 14651 / NBRC 100331 / OCM 82 / Marburg) (Methanobacterium thermoautotrophicum).